The chain runs to 251 residues: Diphthine synthase (251 aa).

Residues Leu-9, Asp-84, Val-87, 112–113 (SI), Leu-160, Ala-194, and His-219 each bind S-adenosyl-L-methionine.

The protein belongs to the diphthine synthase family. In terms of assembly, homodimer.

The catalysed reaction is 2-[(3S)-amino-3-carboxypropyl]-L-histidyl-[translation elongation factor 2] + 3 S-adenosyl-L-methionine = diphthine-[translation elongation factor 2] + 3 S-adenosyl-L-homocysteine + 3 H(+). It functions in the pathway protein modification; peptidyl-diphthamide biosynthesis. Its function is as follows. S-adenosyl-L-methionine-dependent methyltransferase that catalyzes the trimethylation of the amino group of the modified target histidine residue in translation elongation factor 2 (EF-2), to form an intermediate called diphthine. The three successive methylation reactions represent the second step of diphthamide biosynthesis. In Archaeoglobus fulgidus (strain ATCC 49558 / DSM 4304 / JCM 9628 / NBRC 100126 / VC-16), this protein is Diphthine synthase.